We begin with the raw amino-acid sequence, 286 residues long: Thymidylate synthase (286 aa).

DUMP is bound at residue Arg27. Position 57 (His57) interacts with (6R)-5,10-methylene-5,6,7,8-tetrahydrofolate. Residue 148-149 participates in dUMP binding; that stretch reads RR. Residue Cys168 is the Nucleophile of the active site. DUMP-binding positions include 188 to 191, Asn199, and 229 to 231; these read RSAD and HLY. Asp191 lines the (6R)-5,10-methylene-5,6,7,8-tetrahydrofolate pocket. Ala285 lines the (6R)-5,10-methylene-5,6,7,8-tetrahydrofolate pocket.

This sequence belongs to the thymidylate synthase family. Bacterial-type ThyA subfamily. As to quaternary structure, homodimer.

It localises to the cytoplasm. The enzyme catalyses dUMP + (6R)-5,10-methylene-5,6,7,8-tetrahydrofolate = 7,8-dihydrofolate + dTMP. Its pathway is pyrimidine metabolism; dTTP biosynthesis. In terms of biological role, catalyzes the reductive methylation of 2'-deoxyuridine-5'-monophosphate (dUMP) to 2'-deoxythymidine-5'-monophosphate (dTMP) while utilizing 5,10-methylenetetrahydrofolate (mTHF) as the methyl donor and reductant in the reaction, yielding dihydrofolate (DHF) as a by-product. This enzymatic reaction provides an intracellular de novo source of dTMP, an essential precursor for DNA biosynthesis. This Psychrobacter sp. (strain PRwf-1) protein is Thymidylate synthase.